Here is a 100-residue protein sequence, read N- to C-terminus: Urease subunit gamma (100 aa).

The protein belongs to the urease gamma subunit family. In terms of assembly, heterotrimer of UreA (gamma), UreB (beta) and UreC (alpha) subunits. Three heterotrimers associate to form the active enzyme.

The protein resides in the cytoplasm. The catalysed reaction is urea + 2 H2O + H(+) = hydrogencarbonate + 2 NH4(+). The protein operates within nitrogen metabolism; urea degradation; CO(2) and NH(3) from urea (urease route): step 1/1. This is Urease subunit gamma from Prochlorococcus marinus (strain AS9601).